The following is a 166-amino-acid chain: Ribonuclease H (166 aa).

The RNase H type-1 domain occupies 5-147; that stretch reads PRKRVALFTD…VDREARRQAQ (143 aa). Mg(2+)-binding residues include D14, E52, D74, and D139. Residues 128–166 form a disordered region; the sequence is GHTGHPENERVDREARRQAQSQAKTPCPPRAPTLFHEEA. The span at 131 to 144 shows a compositional bias: basic and acidic residues; it reads GHPENERVDREARR.

Belongs to the RNase H family. As to quaternary structure, monomer. Mg(2+) serves as cofactor.

It carries out the reaction Endonucleolytic cleavage to 5'-phosphomonoester.. Endonuclease that specifically degrades the RNA of RNA-DNA hybrids. In Thermus thermophilus (strain ATCC 27634 / DSM 579 / HB8), this protein is Ribonuclease H (rnhA).